The sequence spans 360 residues: A-type ATP synthase subunit C (360 aa).

Positions M1–N25 are disordered.

This sequence belongs to the V-ATPase V0D/AC39 subunit family. As to quaternary structure, has multiple subunits with at least A(3), B(3), C, D, E, F, H, I and proteolipid K(x).

It localises to the cell membrane. Functionally, component of the A-type ATP synthase that produces ATP from ADP in the presence of a proton gradient across the membrane. The chain is A-type ATP synthase subunit C from Methanosarcina barkeri (strain Fusaro / DSM 804).